The chain runs to 441 residues: Cysteine--tRNA ligase (441 aa).

Cys-24 is a Zn(2+) binding site. The 'HIGH' region motif lies at 26-36 (PTVYNYIHIGN). Zn(2+) contacts are provided by Cys-204, His-230, and Glu-234. A 'KMSKS' region motif is present at residues 262 to 266 (KMSKS). Residue Lys-265 coordinates ATP.

The protein belongs to the class-I aminoacyl-tRNA synthetase family. In terms of assembly, monomer. It depends on Zn(2+) as a cofactor.

The protein resides in the cytoplasm. The enzyme catalyses tRNA(Cys) + L-cysteine + ATP = L-cysteinyl-tRNA(Cys) + AMP + diphosphate. This Mycoplasma mycoides subsp. mycoides SC (strain CCUG 32753 / NCTC 10114 / PG1) protein is Cysteine--tRNA ligase.